Here is a 176-residue protein sequence, read N- to C-terminus: Large ribosomal subunit protein uL6 (176 aa).

It belongs to the universal ribosomal protein uL6 family. Part of the 50S ribosomal subunit.

Functionally, this protein binds to the 23S rRNA, and is important in its secondary structure. It is located near the subunit interface in the base of the L7/L12 stalk, and near the tRNA binding site of the peptidyltransferase center. This chain is Large ribosomal subunit protein uL6, found in Lactobacillus acidophilus (strain ATCC 700396 / NCK56 / N2 / NCFM).